We begin with the raw amino-acid sequence, 200 residues long: Nitrile hydratase subunit alpha (200 aa).

Fe(3+) contacts are provided by Cys-105, Cys-108, Ser-109, and Cys-110. Cys-108 bears the Cysteine sulfinic acid (-SO2H) mark. A Cysteine sulfenic acid (-SOH) modification is found at Cys-110.

Belongs to the nitrile hydratase subunit alpha family. In terms of assembly, heterodimer of an alpha and a beta chain. Fe(3+) serves as cofactor. Oxidation on Cys-108 is essential for the activity. Post-translationally, oxidation on Cys-110 stabilizes the Fe-NO ligand coordinated in the inactive form.

The catalysed reaction is an aliphatic primary amide = an aliphatic nitrile + H2O. Inactivated by oxidation of Cys-110 to a sulfenic acid. Functionally, NHase catalyzes the hydration of various nitrile compounds to the corresponding amides. Industrial production of acrylamide is now being developed using some of the enzymes of this class. The polypeptide is Nitrile hydratase subunit alpha (nthA) (Pseudomonas chlororaphis (Pseudomonas aureofaciens)).